A 47-amino-acid chain; its full sequence is Large ribosomal subunit protein bL34 (47 aa).

It belongs to the bacterial ribosomal protein bL34 family.

This is Large ribosomal subunit protein bL34 from Mycobacterium avium (strain 104).